We begin with the raw amino-acid sequence, 690 residues long: Ligand of Numb protein X 2 (690 aa).

The RING-type zinc finger occupies 50–88 (CHICLQPLLQPLDTPCGHTFCYKCLRNFLQEKDFCPLDR). The interval 198–224 (STWSEEPGLDNPAFEESAGADTTQQPL) is disordered. The short motif at 208–211 (NPAF) is the NPXY motif element. 4 consecutive PDZ domains span residues 233-318 (TIEI…LRER), 339-422 (QVAL…ARPG), 468-554 (HITV…KALE), and 600-688 (DIVL…WPGS). The tract at residues 418-455 (IARPGKPQPGNTIREAGNHSSSSQHHTPPPYYSRPSSH) is disordered.

In terms of assembly, interacts with the phosphotyrosine interaction domain of NUMB.

The sequence is that of Ligand of Numb protein X 2 (LNX2) from Homo sapiens (Human).